The following is a 315-amino-acid chain: Glutaminase (315 aa).

Substrate contacts are provided by serine 70, asparagine 120, glutamate 166, asparagine 173, tyrosine 197, tyrosine 249, and valine 267.

The protein belongs to the glutaminase family. In terms of assembly, homotetramer.

The catalysed reaction is L-glutamine + H2O = L-glutamate + NH4(+). This Mesorhizobium japonicum (strain LMG 29417 / CECT 9101 / MAFF 303099) (Mesorhizobium loti (strain MAFF 303099)) protein is Glutaminase.